Reading from the N-terminus, the 352-residue chain is Ion-translocating oxidoreductase complex subunit D (352 aa).

4 helical membrane-spanning segments follow: residues 20-40 (IMLL…WFFG), 42-62 (GTLF…AIVL), 69-91 (VASH…SIPP), and 123-143 (PAMI…TSWL). Threonine 187 bears the FMN phosphoryl threonine mark. 5 helical membrane passes run 215–235 (LAGV…VFLL), 242–262 (WHIP…GWLF), 267–287 (LASP…FFIL), 301–321 (LIFG…GGYP), and 322–342 (DGVA…DYYT).

It belongs to the NqrB/RnfD family. In terms of assembly, the complex is composed of six subunits: RsxA, RsxB, RsxC, RsxD, RsxE and RsxG. The cofactor is FMN.

The protein localises to the cell inner membrane. Part of a membrane-bound complex that couples electron transfer with translocation of ions across the membrane. Required to maintain the reduced state of SoxR. The polypeptide is Ion-translocating oxidoreductase complex subunit D (Salmonella paratyphi A (strain ATCC 9150 / SARB42)).